We begin with the raw amino-acid sequence, 626 residues long: DNA mismatch repair protein MutL (626 aa).

Disordered stretches follow at residues 385 to 413 and 418 to 437; these read SGAS…PSMV and LTPS…VAPD.

The protein belongs to the DNA mismatch repair MutL/HexB family.

Functionally, this protein is involved in the repair of mismatches in DNA. It is required for dam-dependent methyl-directed DNA mismatch repair. May act as a 'molecular matchmaker', a protein that promotes the formation of a stable complex between two or more DNA-binding proteins in an ATP-dependent manner without itself being part of a final effector complex. The chain is DNA mismatch repair protein MutL from Chlorobaculum parvum (strain DSM 263 / NCIMB 8327) (Chlorobium vibrioforme subsp. thiosulfatophilum).